Consider the following 419-residue polypeptide: MDYLPVEVIGNILSRLGGARDVVIASATCRKWREACRKHLQTLSFNSADWPFYRDLTTNRLEILITQTIFQTMGLQGLSIMMDDANKFSAATVIAWLMYTRDTLRRLSYNVRTTPNVNILEICGRQKLEALVLAHNSITGVEPSFQRFPCLKSLSLSYVSISALDLNLLLSACPMIESLELVSLEIAMSDAQVTIELSSPTLKSVYFDGISLDKFILEADSIEFLHMKDCVLELFELIGNGTLKHFKLDDVSVIHLDIMETSESLEVVDVNHFTMVWPKFYQMISRSQKLKKLRLWDVVFDDDDEIIDVESIAAGFSHLTHLSLSYDLKDGAAHYSLQGTTQLENVTVLELGWTVINDVFSIWVEELLRRCPNLKKLIIYGVVSETKTQGDCQILATFTWSIVQLMRKYIHVEVQFEYE.

The F-box domain occupies 1-48 (MDYLPVEVIGNILSRLGGARDVVIASATCRKWREACRKHLQTLSFNSA). 9 LRR repeats span residues 53–82 (YRDL…SIMM), 96–124 (WLMY…EICG), 133–157 (LAHN…LSLS), 158–183 (YVSI…ELVS), 185–209 (EIAM…YFDG), 245–272 (HFKL…DVNH), 273–297 (FTMV…RLWD), 301–326 (DDDD…SLSY), and 356–381 (INDV…IIYG).

The chain is F-box/LRR-repeat protein At1g67190 from Arabidopsis thaliana (Mouse-ear cress).